We begin with the raw amino-acid sequence, 156 residues long: ATP synthase subunit b (156 aa).

A helical transmembrane segment spans residues 7 to 29 (LLGQAISFALFVWFCIKFVWPPL).

This sequence belongs to the ATPase B chain family. F-type ATPases have 2 components, F(1) - the catalytic core - and F(0) - the membrane proton channel. F(1) has five subunits: alpha(3), beta(3), gamma(1), delta(1), epsilon(1). F(0) has three main subunits: a(1), b(2) and c(10-14). The alpha and beta chains form an alternating ring which encloses part of the gamma chain. F(1) is attached to F(0) by a central stalk formed by the gamma and epsilon chains, while a peripheral stalk is formed by the delta and b chains.

It is found in the cell inner membrane. F(1)F(0) ATP synthase produces ATP from ADP in the presence of a proton or sodium gradient. F-type ATPases consist of two structural domains, F(1) containing the extramembraneous catalytic core and F(0) containing the membrane proton channel, linked together by a central stalk and a peripheral stalk. During catalysis, ATP synthesis in the catalytic domain of F(1) is coupled via a rotary mechanism of the central stalk subunits to proton translocation. Its function is as follows. Component of the F(0) channel, it forms part of the peripheral stalk, linking F(1) to F(0). This chain is ATP synthase subunit b, found in Shewanella sp. (strain W3-18-1).